The primary structure comprises 1412 residues: DNA-directed RNA polymerase subunit beta'' (1412 aa).

Zn(2+) is bound by residues C220, C294, C301, and C304.

It belongs to the RNA polymerase beta' chain family. RpoC2 subfamily. As to quaternary structure, in plastids the minimal PEP RNA polymerase catalytic core is composed of four subunits: alpha, beta, beta', and beta''. When a (nuclear-encoded) sigma factor is associated with the core the holoenzyme is formed, which can initiate transcription. Zn(2+) is required as a cofactor.

Its subcellular location is the plastid. It is found in the chloroplast. The catalysed reaction is RNA(n) + a ribonucleoside 5'-triphosphate = RNA(n+1) + diphosphate. In terms of biological role, DNA-dependent RNA polymerase catalyzes the transcription of DNA into RNA using the four ribonucleoside triphosphates as substrates. The chain is DNA-directed RNA polymerase subunit beta'' from Chara vulgaris (Common stonewort).